The sequence spans 196 residues: dTTP/UTP pyrophosphatase (196 aa).

Aspartate 72 functions as the Proton acceptor in the catalytic mechanism.

This sequence belongs to the Maf family. YhdE subfamily. Requires a divalent metal cation as cofactor.

It localises to the cytoplasm. It catalyses the reaction dTTP + H2O = dTMP + diphosphate + H(+). The catalysed reaction is UTP + H2O = UMP + diphosphate + H(+). In terms of biological role, nucleoside triphosphate pyrophosphatase that hydrolyzes dTTP and UTP. May have a dual role in cell division arrest and in preventing the incorporation of modified nucleotides into cellular nucleic acids. This chain is dTTP/UTP pyrophosphatase, found in Chlamydia caviae (strain ATCC VR-813 / DSM 19441 / 03DC25 / GPIC) (Chlamydophila caviae).